A 206-amino-acid chain; its full sequence is Guanylyl cyclase inhibitory protein (206 aa).

G2 is lipidated: N-myristoyl glycine. EF-hand domains are found at residues 31 to 49 (SGLI…VTVG), 51 to 86 (NSSE…LAHG), 87 to 122 (TPED…VYKM), and 135 to 170 (TAEE…DEWV). The Ca(2+) site is built by D64, N66, D68, E75, D100, D102, D104, and E111.

Retina; inner segments, somata and synaptic terminals of cone receptors.

Functionally, does not stimulate guanylyl cyclase (GC) when free calcium ion concentration is low, but inhibits GC when free calcium ions concentration is elevated. The chain is Guanylyl cyclase inhibitory protein (GCIP) from Lithobates pipiens (Northern leopard frog).